The following is a 119-amino-acid chain: NADH-quinone oxidoreductase subunit A (119 aa).

A run of 3 helical transmembrane segments spans residues 9-29 (VLLFILVGIAVGVVPLVLGYV), 63-83 (LVAILFILFDLEIAFLFPWAV), and 88-108 (VGMAGFVAVLIFLTILVVGFA).

The protein belongs to the complex I subunit 3 family. In terms of assembly, NDH-1 is composed of 14 different subunits. Subunits NuoA, H, J, K, L, M, N constitute the membrane sector of the complex.

The protein localises to the cell inner membrane. The enzyme catalyses a quinone + NADH + 5 H(+)(in) = a quinol + NAD(+) + 4 H(+)(out). NDH-1 shuttles electrons from NADH, via FMN and iron-sulfur (Fe-S) centers, to quinones in the respiratory chain. The immediate electron acceptor for the enzyme in this species is believed to be ubiquinone. Couples the redox reaction to proton translocation (for every two electrons transferred, four hydrogen ions are translocated across the cytoplasmic membrane), and thus conserves the redox energy in a proton gradient. The polypeptide is NADH-quinone oxidoreductase subunit A (Verminephrobacter eiseniae (strain EF01-2)).